A 391-amino-acid chain; its full sequence is Saxitoxin and tetrodotoxin-binding protein 1 (391 aa).

The first 20 residues, 1-20 (MGAVPGVVLLLMLAVLGIRA), serve as a signal peptide directing secretion. A run of 2 repeats spans residues 24 to 202 (PEEC…HKKS) and 203 to 391 (PEEC…PEQD). Asn-54, Asn-63, Asn-97, Asn-234, Asn-268, Asn-277, and Asn-307 each carry an N-linked (GlcNAc...) asparagine glycan.

In terms of assembly, homodimer or heterodimer of PSTBP1 and PSTBP2. Glycosylated.

The protein localises to the secreted. Its function is as follows. Binds both saxitoxin and tetradotoxin. May play a role in toxin accumulation and/or excretion. The chain is Saxitoxin and tetrodotoxin-binding protein 1 (psbp1) from Takifugu pardalis (Panther puffer).